We begin with the raw amino-acid sequence, 75 residues long: Small ribosomal subunit protein bS18 (75 aa).

Belongs to the bacterial ribosomal protein bS18 family. In terms of assembly, part of the 30S ribosomal subunit. Forms a tight heterodimer with protein bS6.

Functionally, binds as a heterodimer with protein bS6 to the central domain of the 16S rRNA, where it helps stabilize the platform of the 30S subunit. The sequence is that of Small ribosomal subunit protein bS18 from Pseudoalteromonas translucida (strain TAC 125).